Here is a 322-residue protein sequence, read N- to C-terminus: Rhomboid-like protein 16, chloroplastic (322 aa).

The transit peptide at 1 to 52 (MHAIFCRRVAVGCSSPQLTKLVTKQASQSRHSLSHLLPFDLSSRFVPPYVVS) directs the protein to the chloroplast. The next 6 membrane-spanning stretches (helical) occupy residues 110-130 (WING…AVFT), 166-186 (FSHV…YFGA), 201-221 (YFAG…LSVI), 238-258 (IGKL…MLLY), 265-285 (FGLM…LNII), and 295-315 (TLTS…WARI).

The protein belongs to the peptidase S54 family.

It localises to the plastid. Its subcellular location is the chloroplast membrane. Rhomboid-type serine protease that catalyzes intramembrane proteolysis. May cleave the plastid translocon component Tic40. This Arabidopsis thaliana (Mouse-ear cress) protein is Rhomboid-like protein 16, chloroplastic.